The sequence spans 792 residues: Ubiquitin carboxyl-terminal hydrolase 10 (792 aa).

An N-acetylalanine modification is found at Ala2. An interaction with p53/TP53 region spans residues 2 to 99; it reads ALHNPQYIFG…ILGCTTSKKI (98 aa). A G3BP1-binding region spans residues 6–21; that stretch reads PQYIFGDFSPDEFNQF. Thr24 bears the Phosphothreonine mark. Residues 126 to 164 form a disordered region; the sequence is SNAEAETLENDSGAGGLGQRERKKKKKRPPGYYSYLKDG. Residues Ser208 and Ser223 each carry the phosphoserine modification. A compositionally biased stretch (basic and acidic residues) spans 300-309; it reads DEGADLDPAK. The disordered stretch occupies residues 300 to 323; the sequence is DEGADLDPAKPESQSPPAESALSA. A Phosphoserine modification is found at Ser314. Phosphoserine; by ATM is present on Ser330. The interval 350 to 369 is disordered; the sequence is PMAYVETKCSPPVPSPLASE. Phosphoserine is present on residues Ser359 and Ser364. Positions 409-789 constitute a USP domain; it reads RGLINKGNWC…TAYLLYYRRV (381 aa). Cys418 acts as the Nucleophile in catalysis. At Ser541 the chain carries Phosphoserine. Positions 542 to 580 are disordered; sequence PTHEKHSVSNGPRSDLIEDEELEDTGKGSEDEWEQVGPK. A Phosphothreonine modification is found at Thr566. Ser570 is subject to Phosphoserine. His743 functions as the Proton acceptor in the catalytic mechanism.

This sequence belongs to the peptidase C19 family. USP10 subfamily. As to quaternary structure, found in a deubiquitination complex with TANK, USP10 and ZC3H12A; this complex inhibits genotoxic stress- or interleukin-1-beta (IL1B)-mediated NF-kappa-B activation by promoting IKBKG or TRAF6 deubiquitination. Interacts with IKBKG; this interaction increases in response to DNA damage. Interacts with TANK; this interaction increases in response to DNA damage. Interacts with TRAF6; this interaction increases in response to DNA damage. Interacts with ZC3H12A; this interaction increases in response to DNA damage. Interacts with G3BP1 (via NTF2 domain) and G3BP2 (via NTF2 domain); inhibiting stress granule formation. Post-translationally, phosphorylated by ATM following DNA damage, leading to stabilization and translocation it to the nucleus. Ubiquitinated. Deubiquitinated by USP13.

The protein localises to the cytoplasm. It is found in the nucleus. The protein resides in the early endosome. The catalysed reaction is Thiol-dependent hydrolysis of ester, thioester, amide, peptide and isopeptide bonds formed by the C-terminal Gly of ubiquitin (a 76-residue protein attached to proteins as an intracellular targeting signal).. Specifically inhibited by spautin-1 (specific and potent autophagy inhibitor-1), a derivative of MBCQ that binds to USP10 and inhibits deubiquitinase activity. Regulated by PIK3C3/VPS34-containing complexes. In terms of biological role, hydrolase that can remove conjugated ubiquitin from target proteins such as p53/TP53, RPS2/us5, RPS3/us3, RPS10/eS10, BECN1, SNX3 and CFTR. Acts as an essential regulator of p53/TP53 stability: in unstressed cells, specifically deubiquitinates p53/TP53 in the cytoplasm, leading to counteract MDM2 action and stabilize p53/TP53. Following DNA damage, translocates to the nucleus and deubiquitinates p53/TP53, leading to regulate the p53/TP53-dependent DNA damage response. Component of a regulatory loop that controls autophagy and p53/TP53 levels: mediates deubiquitination of BECN1, a key regulator of autophagy, leading to stabilize the PIK3C3/VPS34-containing complexes. In turn, PIK3C3/VPS34-containing complexes regulate USP10 stability, suggesting the existence of a regulatory system by which PIK3C3/VPS34-containing complexes regulate p53/TP53 protein levels via USP10 and USP13. Does not deubiquitinate MDM2. Plays a key role in 40S ribosome subunit recycling when a ribosome has stalled during translation: acts both by inhibiting formation of stress granules, which store stalled translation pre-initiation complexes, and mediating deubiquitination of 40S ribosome subunits. Acts as a negative regulator of stress granules formation by lowering G3BP1 and G3BP2 valence, thereby preventing G3BP1 and G3BP2 ability to undergo liquid-liquid phase separation (LLPS) and assembly of stress granules. Promotes 40S ribosome subunit recycling following ribosome dissociation in response to ribosome stalling by mediating deubiquitination of 40S ribosomal proteins RPS2/us5, RPS3/us3 and RPS10/eS10, thereby preventing their degradation by the proteasome. Part of a ribosome quality control that takes place when ribosomes have stalled during translation initiation (iRQC): USP10 acts by removing monoubiquitination of RPS2/us5 and RPS3/us3, promoting 40S ribosomal subunit recycling. Deubiquitinates CFTR in early endosomes, enhancing its endocytic recycling. Involved in a TANK-dependent negative feedback response to attenuate NF-kappa-B activation via deubiquitinating IKBKG or TRAF6 in response to interleukin-1-beta (IL1B) stimulation or upon DNA damage. Deubiquitinates TBX21 leading to its stabilization. Plays a negative role in the RLR signaling pathway upon RNA virus infection by blocking the RIGI-mediated MAVS activation. Mechanistically, removes the unanchored 'Lys-63'-linked polyubiquitin chains of MAVS to inhibit its aggregation, essential for its activation. The chain is Ubiquitin carboxyl-terminal hydrolase 10 (Usp10) from Mus musculus (Mouse).